Reading from the N-terminus, the 65-residue chain is Putative beta-neurotoxin RjAa8 (65 aa).

An LCN-type CS-alpha/beta domain is found at 1–64; that stretch reads KEGYPMGRDG…VWDSSTNKCG (64 aa). Disulfide bonds link cysteine 11/cysteine 63, cysteine 15/cysteine 37, cysteine 22/cysteine 44, and cysteine 26/cysteine 46.

The protein belongs to the long (4 C-C) scorpion toxin superfamily. Sodium channel inhibitor family. Beta subfamily. Expressed by the venom gland.

It is found in the secreted. Beta toxins bind voltage-independently at site-4 of sodium channels (Nav) and shift the voltage of activation toward more negative potentials thereby affecting sodium channel activation and promoting spontaneous and repetitive firing. The chain is Putative beta-neurotoxin RjAa8 from Rhopalurus junceus (Caribbean blue scorpion).